The following is a 454-amino-acid chain: Probable ECA polymerase (454 aa).

The next 11 helical transmembrane spans lie at 3–23 (LGQF…ILTL), 39–59 (FSML…MLVF), 61–81 (FGVA…ATAF), 119–139 (LALV…FLLF), 154–174 (GVAL…VYFL), 180–200 (AWFF…VIVG), 201–221 (GTRA…IVRG), 222–242 (WITL…MFWL), 340–360 (LVVM…GLII), 377–397 (YKAA…IVLA), and 409–429 (VFFC…YWLF).

The protein belongs to the WzyE family. In terms of assembly, probably part of a complex composed of WzxE, WzyE and WzzE.

It localises to the cell inner membrane. It participates in bacterial outer membrane biogenesis; enterobacterial common antigen biosynthesis. Its function is as follows. Probably involved in the polymerization of enterobacterial common antigen (ECA) trisaccharide repeat units. The sequence is that of Probable ECA polymerase from Yersinia pestis bv. Antiqua (strain Angola).